The chain runs to 418 residues: Sterigmatocystin 8-O-methyltransferase (418 aa).

Positions 1–41 are excised as a propeptide; it reads MALPSKAALVGLANTLSEQVKRYLATAGETKSPEDHKLCIE. 170–176 lines the substrate pocket; that stretch reads MRSGASF. The segment at 206–225 is substrate binding; it reads LFDYYSTVDEVRGRRFDLGM. S-adenosyl-L-methionine contacts are provided by residues 254–255, D277, 297–298, and R313; these read GG and DI. Residue H317 is the Proton acceptor of the active site.

This sequence belongs to the class I-like SAM-binding methyltransferase superfamily. Cation-independent O-methyltransferase family. COMT subfamily.

The protein resides in the cytoplasm. Its subcellular location is the vacuole. The enzyme catalyses sterigmatocystin + S-adenosyl-L-methionine = 8-O-methylsterigmatocystin + S-adenosyl-L-homocysteine + H(+). The catalysed reaction is dihydrosterigmatocystin + S-adenosyl-L-methionine = 8-O-methyldihydrosterigmatocystin + S-adenosyl-L-homocysteine + H(+). Its pathway is mycotoxin biosynthesis; aflatoxin biosynthesis. Its function is as follows. Sterigmatocystin 8-O-methyltransferase; part of the gene cluster that mediates the biosynthesis of aflatoxins, a group of polyketide-derived furanocoumarins, and part of the most toxic and carcinogenic compounds among the known mycotoxins. The four major aflatoxins produced by A.parasiticus are aflatoxin B1 (AFB1), aflatoxin B2 (AFB2), aflatoxin G1 (AFG1) and aflatoxin G2 (AFG2). Within the aflatoxin pathway, the O-methyltransferase aflP uses both sterigmatocystin (ST) and dihydrosterigmatocystin (DHST) as substrates to yield O-methylsterigmatocystin (OMST) and dihydro-O-methylsterigmatocystin (DHOMST), respectively. The biosynthesis of aflatoxins begins with the norsolorinic acid synthase aflC that combines a hexanoyl starter unit produced by the fatty acid synthase aflA/aflB and 7 malonyl-CoA extender units to synthesize the precursor NOR. The second step is the conversion of NOR to averantin and requires the norsolorinic acid ketoreductase aflD, which catalyzes the dehydration of norsolorinic acid to form (1'S)-averantin. The norsolorinic acid reductases aflE and aflF may also play a role in the conversion of NOR to AVN. The cytochrome P450 monooxygenase aflG then catalyzes the hydroxylation of AVN to 5'hydroxyaverantin (HAVN). The next step is performed by the 5'-hydroxyaverantin dehydrogenase aflH that transforms HAVN to 5'-oxoaverantin (OAVN) which is further converted to averufin (AVF) by aflK that plays a dual role in the pathway, as a 5'-oxoaverantin cyclase that mediates conversion of 5'-oxoaverantin, as well as a versicolorin B synthase in a later step in the pathway. The averufin oxidase aflI catalyzes the conversion of AVF to versiconal hemiacetal acetate (VHA). VHA is then the substrate for the versiconal hemiacetal acetate esterase aflJ to yield versiconal (VAL). Versicolorin B synthase aflK then converts VAL to versicolorin B (VERB) by closing the bisfuran ring of aflatoxin which is required for DNA-binding, thus giving to aflatoxin its activity as a mutagen. Then, the activity of the versicolorin B desaturase aflL leads to versicolorin A (VERA). A branch point starts from VERB since it can also be converted to dihydrodemethylsterigmatocystin (DMDHST), probably also by aflL, VERA being a precursor for aflatoxins B1 and G1, and DMDHST for aflatoxins B2 and G2. Next, the versicolorin reductase aflM and the cytochrome P450 monooxygenase aflN are involved in conversion of VERA to demethylsterigmatocystin (DMST). AflX and aflY seem also involved in this step, through probable aflX-mediated epoxide ring-opening step following versicolorin A oxidation and aflY-mediated Baeyer-Villiger oxidation required for the formation of the xanthone ring. The methyltransferase aflO then leads to the modification of DMST to sterigmatocystin (ST), and of DMDHST to dihydrosterigmatocystin (DHST). Both ST and DHST are then substrates of the O-methyltransferase aflP to yield O-methylsterigmatocystin (OMST) and dihydro-O-methylsterigmatocystin (DHOMST), respectively. Finally OMST is converted to aflatoxins B1 and G1, and DHOMST to aflatoxins B2 and G2, via the action of several enzymes including O-methylsterigmatocystin oxidoreductase aflQ, the cytochrome P450 monooxygenase aflU, but also the NADH-dependent flavin oxidoreductase nadA which is specifically required for the synthesis of AFG1. The protein is Sterigmatocystin 8-O-methyltransferase of Aspergillus parasiticus (strain ATCC 56775 / NRRL 5862 / SRRC 143 / SU-1).